A 377-amino-acid chain; its full sequence is Carboxynorspermidine/carboxyspermidine decarboxylase (377 aa).

The residue at position 41 (K41) is an N6-(pyridoxal phosphate)lysine. Positions 238 and 274 each coordinate substrate.

It belongs to the Orn/Lys/Arg decarboxylase class-II family. NspC subfamily. As to quaternary structure, homodimer. Pyridoxal 5'-phosphate is required as a cofactor.

Its subcellular location is the cytoplasm. The catalysed reaction is carboxynorspermidine + H(+) = norspermidine + CO2. It catalyses the reaction carboxyspermidine + H(+) = spermidine + CO2. Catalyzes the decarboxylation of carboxynorspermidine and carboxyspermidine. Carboxynorspermidine is decarboxylated 20-fold more efficiently than carboxyspermidine. Exhibits some activity with L-ornithine, but shows no activity with L-arginine, L-lysine or meso-diaminopimelate. The sequence is that of Carboxynorspermidine/carboxyspermidine decarboxylase from Vibrio vulnificus (strain CMCP6).